Consider the following 313-residue polypeptide: 4-hydroxy-3-methylbut-2-enyl diphosphate reductase (313 aa).

Cys12 lines the [4Fe-4S] cluster pocket. Residues His41 and His74 each contribute to the (2E)-4-hydroxy-3-methylbut-2-enyl diphosphate site. Residues His41 and His74 each coordinate dimethylallyl diphosphate. Isopentenyl diphosphate-binding residues include His41 and His74. Cys96 is a binding site for [4Fe-4S] cluster. His124 provides a ligand contact to (2E)-4-hydroxy-3-methylbut-2-enyl diphosphate. A dimethylallyl diphosphate-binding site is contributed by His124. Residue His124 coordinates isopentenyl diphosphate. Residue Glu126 is the Proton donor of the active site. Residue Thr167 participates in (2E)-4-hydroxy-3-methylbut-2-enyl diphosphate binding. Residue Cys197 coordinates [4Fe-4S] cluster. Positions 225, 226, 227, and 269 each coordinate (2E)-4-hydroxy-3-methylbut-2-enyl diphosphate. Positions 225, 226, 227, and 269 each coordinate dimethylallyl diphosphate. 4 residues coordinate isopentenyl diphosphate: Ser225, Ser226, Asn227, and Ser269.

The protein belongs to the IspH family. As to quaternary structure, homodimer. It depends on [4Fe-4S] cluster as a cofactor.

It carries out the reaction isopentenyl diphosphate + 2 oxidized [2Fe-2S]-[ferredoxin] + H2O = (2E)-4-hydroxy-3-methylbut-2-enyl diphosphate + 2 reduced [2Fe-2S]-[ferredoxin] + 2 H(+). It catalyses the reaction dimethylallyl diphosphate + 2 oxidized [2Fe-2S]-[ferredoxin] + H2O = (2E)-4-hydroxy-3-methylbut-2-enyl diphosphate + 2 reduced [2Fe-2S]-[ferredoxin] + 2 H(+). It participates in isoprenoid biosynthesis; dimethylallyl diphosphate biosynthesis; dimethylallyl diphosphate from (2E)-4-hydroxy-3-methylbutenyl diphosphate: step 1/1. Its pathway is isoprenoid biosynthesis; isopentenyl diphosphate biosynthesis via DXP pathway; isopentenyl diphosphate from 1-deoxy-D-xylulose 5-phosphate: step 6/6. Catalyzes the conversion of 1-hydroxy-2-methyl-2-(E)-butenyl 4-diphosphate (HMBPP) into a mixture of isopentenyl diphosphate (IPP) and dimethylallyl diphosphate (DMAPP). Acts in the terminal step of the DOXP/MEP pathway for isoprenoid precursor biosynthesis. The chain is 4-hydroxy-3-methylbut-2-enyl diphosphate reductase from Buchnera aphidicola subsp. Schizaphis graminum (strain Sg).